A 260-amino-acid chain; its full sequence is Phosphatidate cytidylyltransferase (260 aa).

7 helical membrane passes run 9–29 (IIAL…LMIF), 46–66 (MIKF…IIML), 70–90 (AGPW…FIVL), 102–122 (FMDA…FMFF), 130–150 (LHYI…AYLF), 172–192 (FIGG…FVDF), and 196–216 (VWIL…GDLV).

Belongs to the CDS family.

The protein resides in the cell membrane. It catalyses the reaction a 1,2-diacyl-sn-glycero-3-phosphate + CTP + H(+) = a CDP-1,2-diacyl-sn-glycerol + diphosphate. It participates in phospholipid metabolism; CDP-diacylglycerol biosynthesis; CDP-diacylglycerol from sn-glycerol 3-phosphate: step 3/3. In Staphylococcus aureus (strain COL), this protein is Phosphatidate cytidylyltransferase (cdsA).